The following is a 734-amino-acid chain: Putative K(+)-stimulated pyrophosphate-energized sodium pump (734 aa).

A run of 5 helical transmembrane segments spans residues 3–23, 58–78, 82–102, 134–154, and 169–189; these read SILFWLVPVASVLALCFAYYF, IVGCVFLGLVILFSIMAYGFH, VWVPIAFLTGGFFSGLSGFLG, VMGLVVVGLGLLDISFWYLLL, and LCVITTTMLTFGMGASTQALF. Lys-199 serves as a coordination point for substrate. 4 residues coordinate Mg(2+): Asp-202, Asp-206, Asn-229, and Asp-232. Helical transmembrane passes span 244–264, 275–295, 314–334, 336–356, 377–397, 398–418, and 423–443; these read LYESYCGSILATAALGAAAFI, AVIAPMLIAAVGILLSIIGIF, FGTNLSSVLIVAATFLILWLL, LDNWIWISCAVVVGLLVGIVI, SGKTGPATVIISGIGLGMLST, AIPVIAVVVGIIASFLLASGF, and VGMGLYGIGIAAVGMLSTLGI. Mg(2+) is bound at residue Asp-455. 4 consecutive transmembrane segments (helical) span residues 491–511, 557–577, 629–649, and 650–670; these read FAIGSAALTGLALLASYIEEI, GMFLGSMMAFLFCGLTMNAVG, ILAPIATGLIFGVTGVLGLLI, and GGLSTGFVLAIFMANAGGAWD. Residues Asp-670, Asp-696, and Asp-700 each coordinate Ca(2+). Lys-703 provides a ligand contact to substrate. Residues 712-732 traverse the membrane as a helical segment; that stretch reads ILIKLMSMVAIVMAGLTVAWS.

This sequence belongs to the H(+)-translocating pyrophosphatase (TC 3.A.10) family. K(+)-stimulated subfamily. In terms of assembly, homodimer. Mg(2+) is required as a cofactor.

Its subcellular location is the cell inner membrane. It carries out the reaction Na(+)(in) + diphosphate + H2O = Na(+)(out) + 2 phosphate + H(+). With respect to regulation, requires K(+) for maximal activity. In terms of biological role, sodium pump that utilizes the energy of pyrophosphate hydrolysis as the driving force for Na(+) movement across the membrane. This chain is Putative K(+)-stimulated pyrophosphate-energized sodium pump, found in Bacteroides thetaiotaomicron (strain ATCC 29148 / DSM 2079 / JCM 5827 / CCUG 10774 / NCTC 10582 / VPI-5482 / E50).